We begin with the raw amino-acid sequence, 261 residues long: Ribonuclease PH (261 aa).

Residues Arg88 and 126 to 128 (GTR) each bind phosphate. A disordered region spans residues 242–261 (PYPGVLPEPKNPEPKKKFGA). Residues 251 to 261 (KNPEPKKKFGA) are compositionally biased toward basic and acidic residues.

Belongs to the RNase PH family. As to quaternary structure, homohexameric ring arranged as a trimer of dimers.

The enzyme catalyses tRNA(n+1) + phosphate = tRNA(n) + a ribonucleoside 5'-diphosphate. Phosphorolytic 3'-5' exoribonuclease that plays an important role in tRNA 3'-end maturation. Removes nucleotide residues following the 3'-CCA terminus of tRNAs; can also add nucleotides to the ends of RNA molecules by using nucleoside diphosphates as substrates, but this may not be physiologically important. Probably plays a role in initiation of 16S rRNA degradation (leading to ribosome degradation) during starvation. The sequence is that of Ribonuclease PH from Rhodococcus erythropolis (strain PR4 / NBRC 100887).